The sequence spans 103 residues: Matrix Gla protein (103 aa).

Residues 1 to 19 (MRSLLLLTVLAALVVAILC) form the signal peptide. The residue at position 21 (Glu-21) is a 4-carboxyglutamate. Phosphoserine is present on residues Ser-22, Ser-25, and Ser-28. In terms of domain architecture, Gla spans 51-97 (MAKAQERVREQRKPAYELNREACDDYKLCERYAMVYGYNAAYNRYFR). A 4-carboxyglutamate mark is found at Glu-56, Glu-60, Glu-67, and Glu-71. A disulfide bridge connects residues Cys-73 and Cys-79.

Belongs to the osteocalcin/matrix Gla protein family. Requires vitamin K-dependent gamma-carboxylation for its function.

Its subcellular location is the secreted. Its function is as follows. Associates with the organic matrix of bone and cartilage. Thought to act as an inhibitor of bone formation. The chain is Matrix Gla protein (MGP) from Oryctolagus cuniculus (Rabbit).